The following is a 198-amino-acid chain: tRNA (pseudouridine(54)-N(1))-methyltransferase (198 aa).

Residue L128 participates in S-adenosyl-L-methionine binding.

It belongs to the methyltransferase superfamily. TrmY family. In terms of assembly, homodimer.

Its subcellular location is the cytoplasm. It catalyses the reaction pseudouridine(54) in tRNA + S-adenosyl-L-methionine = N(1)-methylpseudouridine(54) in tRNA + S-adenosyl-L-homocysteine + H(+). Specifically catalyzes the N1-methylation of pseudouridine at position 54 (Psi54) in tRNAs. The protein is tRNA (pseudouridine(54)-N(1))-methyltransferase of Natronomonas pharaonis (strain ATCC 35678 / DSM 2160 / CIP 103997 / JCM 8858 / NBRC 14720 / NCIMB 2260 / Gabara) (Halobacterium pharaonis).